The following is a 191-amino-acid chain: Large ribosomal subunit protein uL5 (191 aa).

It belongs to the universal ribosomal protein uL5 family. In terms of assembly, part of the 50S ribosomal subunit; part of the 5S rRNA/L5/L18/L25 subcomplex. Contacts the 5S rRNA and the P site tRNA. Forms a bridge to the 30S subunit in the 70S ribosome.

Its function is as follows. This is one of the proteins that bind and probably mediate the attachment of the 5S RNA into the large ribosomal subunit, where it forms part of the central protuberance. In the 70S ribosome it contacts protein S13 of the 30S subunit (bridge B1b), connecting the 2 subunits; this bridge is implicated in subunit movement. Contacts the P site tRNA; the 5S rRNA and some of its associated proteins might help stabilize positioning of ribosome-bound tRNAs. The chain is Large ribosomal subunit protein uL5 from Micrococcus luteus (Micrococcus lysodeikticus).